Here is an 83-residue protein sequence, read N- to C-terminus: U-actitoxin-Aeq6b (83 aa).

A signal peptide spans 1-20; the sequence is MIYKAVFVCLVLVLLGDVFC. Positions 21 to 36 are excised as a propeptide; it reads SPRNSGGGTLNDNPFE. Proline 82 carries the proline amide modification.

In terms of processing, contains 3 disulfide bonds. In terms of tissue distribution, expressed by acrorhagi.

It localises to the secreted. The protein resides in the nematocyst. In terms of biological role, toxin. In Actinia equina (Beadlet anemone), this protein is U-actitoxin-Aeq6b.